Here is a 287-residue protein sequence, read N- to C-terminus: Prepilin leader peptidase/N-methyltransferase (287 aa).

The chain crosses the membrane as a helical span at residues 12–32 (FMYLVVGLFSLAVGSLLNVII). Residues Cys-71, Cys-74, Cys-96, and Cys-99 each contribute to the Zn(2+) site. 5 helical membrane-spanning segments follow: residues 127–147 (FTIQ…LVFI), 158–178 (LTLG…FVSL), 182–202 (VLSC…FYLM), 215–235 (LFAA…LLIS), and 259–279 (PFGP…DSII).

It belongs to the peptidase A24 family. Zn(2+) is required as a cofactor.

The protein localises to the cell inner membrane. The enzyme catalyses Typically cleaves a -Gly-|-Phe- bond to release an N-terminal, basic peptide of 5-8 residues from type IV prepilin, and then N-methylates the new N-terminal amino group, the methyl donor being S-adenosyl-L-methionine.. In terms of biological role, plays an essential role in type IV pili and type II pseudopili formation by proteolytically removing the leader sequence from substrate proteins and subsequently monomethylating the alpha-amino group of the newly exposed N-terminal phenylalanine. In Legionella pneumophila, this protein is Prepilin leader peptidase/N-methyltransferase (pilD).